A 310-amino-acid chain; its full sequence is Protoheme IX farnesyltransferase (310 aa).

The next 9 membrane-spanning stretches (helical) occupy residues 31–51, 52–72, 102–119, 123–145, 151–171, 179–199, 225–245, 248–268, and 281–301; these read VMSL…DSIH, PLIA…AGAM, ALSF…FMAL, ILAS…IWLK, NIVI…AAVS, IILF…IALF, ILIY…IGMN, IYLI…FSLF, and FTYS…TSTI.

This sequence belongs to the UbiA prenyltransferase family. Protoheme IX farnesyltransferase subfamily.

The protein localises to the cell inner membrane. The catalysed reaction is heme b + (2E,6E)-farnesyl diphosphate + H2O = Fe(II)-heme o + diphosphate. The protein operates within porphyrin-containing compound metabolism; heme O biosynthesis; heme O from protoheme: step 1/1. Converts heme B (protoheme IX) to heme O by substitution of the vinyl group on carbon 2 of heme B porphyrin ring with a hydroxyethyl farnesyl side group. The protein is Protoheme IX farnesyltransferase of Rickettsia prowazekii (strain Madrid E).